The following is a 647-amino-acid chain: Threonine--tRNA ligase (647 aa).

Residues 1–61 (MIKITFPDGA…TEDGSIEIVT (61 aa)) form the TGS domain. The tract at residues 242 to 540 (DHRKLGKELD…LIENYKGAFP (299 aa)) is catalytic. Residues cysteine 336, histidine 387, and histidine 517 each contribute to the Zn(2+) site.

This sequence belongs to the class-II aminoacyl-tRNA synthetase family. In terms of assembly, homodimer. Zn(2+) is required as a cofactor.

The protein localises to the cytoplasm. The enzyme catalyses tRNA(Thr) + L-threonine + ATP = L-threonyl-tRNA(Thr) + AMP + diphosphate + H(+). Functionally, catalyzes the attachment of threonine to tRNA(Thr) in a two-step reaction: L-threonine is first activated by ATP to form Thr-AMP and then transferred to the acceptor end of tRNA(Thr). Also edits incorrectly charged L-seryl-tRNA(Thr). This chain is Threonine--tRNA ligase, found in Streptococcus gordonii (strain Challis / ATCC 35105 / BCRC 15272 / CH1 / DL1 / V288).